The primary structure comprises 744 residues: Leukocyte immunoglobulin-like receptor subfamily B member 3A (744 aa).

Residues Met1–Gly24 form the signal peptide. Topologically, residues Ser25–Lys543 are extracellular. 5 consecutive Ig-like C2-type domains span residues Leu26 to Gly119, Tyr121 to Gly221, Leu223 to Gly316, Tyr320 to Gly419, and Phe426 to Gly520. Cystine bridges form between Cys49/Cys98, Cys144/Cys197, and Cys246/Cys295. The N-linked (GlcNAc...) asparagine glycan is linked to Asn79. The N-linked (GlcNAc...) asparagine glycan is linked to Asn338. A disulfide bond links Cys343 and Cys395. N-linked (GlcNAc...) asparagine glycosylation occurs at Asn440. An intrachain disulfide couples Cys445 to Cys496. Residues Ala544–Leu564 traverse the membrane as a helical segment. Topologically, residues Arg565–Gln744 are cytoplasmic. Residues Phe572–Glu584 are compositionally biased toward basic and acidic residues. Disordered stretches follow at residues Phe572–Tyr617, Glu630–Ser652, and Glu667–Gln744. Residues Ser615–Val620 carry the ITIM motif 1 motif. 2 consecutive short sequence motifs (ITIM motif) follow at residues Val695–Leu700 and Ser725–Leu730. Tyr697 and Tyr727 each carry phosphotyrosine; by LYN.

Interacts with LYN, PTPN6/SHP-1 and PTPN11/SHP-2. In terms of processing, phosphorylated on tyrosine residues by LYN. Phosphorylation at Tyr-697 and Tyr-727 is important for interaction with PTPN6/SHP-1 and PTPN11/SHP-2.

The protein resides in the cell membrane. Its function is as follows. May act as receptor for class I MHC antigens. Becomes activated upon coligation with immune receptors, such as FCGR2B and the B-cell receptor. Down-regulates antigen-induced B-cell activation by recruiting phosphatases to its immunoreceptor tyrosine-based inhibitor motifs (ITIM). The polypeptide is Leukocyte immunoglobulin-like receptor subfamily B member 3A (Rattus norvegicus (Rat)).